Here is a 200-residue protein sequence, read N- to C-terminus: 3-isopropylmalate dehydratase small subunit (200 aa).

This sequence belongs to the LeuD family. LeuD type 1 subfamily. In terms of assembly, heterodimer of LeuC and LeuD.

The enzyme catalyses (2R,3S)-3-isopropylmalate = (2S)-2-isopropylmalate. It functions in the pathway amino-acid biosynthesis; L-leucine biosynthesis; L-leucine from 3-methyl-2-oxobutanoate: step 2/4. Catalyzes the isomerization between 2-isopropylmalate and 3-isopropylmalate, via the formation of 2-isopropylmaleate. This Haemophilus influenzae (strain PittEE) protein is 3-isopropylmalate dehydratase small subunit.